Reading from the N-terminus, the 168-residue chain is Leukotoxin-activating lysine-acyltransferase LtxC (168 aa).

Catalysis depends on residues H23 and D92.

Belongs to the RTX toxin acyltransferase family.

The protein localises to the cytoplasm. The catalysed reaction is a fatty acyl-[ACP] + L-lysyl-[protein] = N(6)-(fatty acyl)-L-lysyl-[protein] + holo-[ACP] + H(+). In terms of biological role, required for full activity and modification of the LtxA leukotoxin. Involved in fatty acid modification of the protoxin at two internal lysine residues, thereby converting it to the active toxin. The protein is Leukotoxin-activating lysine-acyltransferase LtxC of Aggregatibacter actinomycetemcomitans (Actinobacillus actinomycetemcomitans).